Reading from the N-terminus, the 202-residue chain is Small ribosomal subunit protein uS4 (202 aa).

A compositionally biased stretch (basic residues) spans 1–13 (MSRYRGPRLRVTR). A disordered region spans residues 1–42 (MSRYRGPRLRVTRRLGELPGLTRKASKKSNPPGQHGQARRKR). In terms of domain architecture, S4 RNA-binding spans 90-152 (NRLDNVCFRL…KASKKLVEGN (63 aa)).

The protein belongs to the universal ribosomal protein uS4 family. Part of the 30S ribosomal subunit. Contacts protein S5. The interaction surface between S4 and S5 is involved in control of translational fidelity.

One of the primary rRNA binding proteins, it binds directly to 16S rRNA where it nucleates assembly of the body of the 30S subunit. Functionally, with S5 and S12 plays an important role in translational accuracy. This chain is Small ribosomal subunit protein uS4, found in Prochlorococcus marinus (strain AS9601).